The primary structure comprises 186 residues: Large ribosomal subunit protein uL5 (186 aa).

It belongs to the universal ribosomal protein uL5 family. In terms of assembly, part of the 50S ribosomal subunit; part of the 5S rRNA/L5/L18/L25 subcomplex. Contacts the 5S rRNA and the P site tRNA. Forms a bridge to the 30S subunit in the 70S ribosome.

Functionally, this is one of the proteins that bind and probably mediate the attachment of the 5S RNA into the large ribosomal subunit, where it forms part of the central protuberance. In the 70S ribosome it contacts protein S13 of the 30S subunit (bridge B1b), connecting the 2 subunits; this bridge is implicated in subunit movement. Contacts the P site tRNA; the 5S rRNA and some of its associated proteins might help stabilize positioning of ribosome-bound tRNAs. The chain is Large ribosomal subunit protein uL5 from Jannaschia sp. (strain CCS1).